The chain runs to 148 residues: Nucleoside diphosphate kinase (148 aa).

K9, F57, R85, T91, R102, and N112 together coordinate ATP. A Phosphothreonine modification is found at T91. H115 serves as the catalytic Pros-phosphohistidine intermediate. S122 is modified (phosphoserine).

The protein belongs to the NDK family. As to quaternary structure, homotetramer. It depends on Mg(2+) as a cofactor.

Its subcellular location is the cytoplasm. It catalyses the reaction a 2'-deoxyribonucleoside 5'-diphosphate + ATP = a 2'-deoxyribonucleoside 5'-triphosphate + ADP. The enzyme catalyses a ribonucleoside 5'-diphosphate + ATP = a ribonucleoside 5'-triphosphate + ADP. In terms of biological role, major role in the synthesis of nucleoside triphosphates other than ATP. The ATP gamma phosphate is transferred to the NDP beta phosphate via a ping-pong mechanism, using a phosphorylated active-site intermediate. This Bacillus cereus (strain ATCC 10987 / NRS 248) protein is Nucleoside diphosphate kinase.